The chain runs to 236 residues: Purine nucleoside phosphorylase DeoD-type (236 aa).

His4 lines the a purine D-ribonucleoside pocket. Residues Gly20, Arg24, Arg43, and Arg87–Thr90 each bind phosphate. Residues Glu179 to Glu181 and Ser203 to Asp204 each bind a purine D-ribonucleoside. Asp204 acts as the Proton donor in catalysis.

It belongs to the PNP/UDP phosphorylase family. In terms of assembly, homohexamer; trimer of homodimers.

The enzyme catalyses a purine D-ribonucleoside + phosphate = a purine nucleobase + alpha-D-ribose 1-phosphate. The catalysed reaction is a purine 2'-deoxy-D-ribonucleoside + phosphate = a purine nucleobase + 2-deoxy-alpha-D-ribose 1-phosphate. In terms of biological role, catalyzes the reversible phosphorolytic breakdown of the N-glycosidic bond in the beta-(deoxy)ribonucleoside molecules, with the formation of the corresponding free purine bases and pentose-1-phosphate. The sequence is that of Purine nucleoside phosphorylase DeoD-type from Streptococcus pneumoniae (strain CGSP14).